A 662-amino-acid chain; its full sequence is Translation factor guf1, mitochondrial (662 aa).

Residues 1–42 (MRGCLQLARWLSAAPNWPASSLLKAPGSSFATRLFTTTSSYK) constitute a mitochondrion transit peptide. The 181-residue stretch at 64 to 244 (ERYRNFCIVA…TVVEKIPAPI (181 aa)) folds into the tr-type G domain. Residues 73 to 80 (AHVDHGKS), 137 to 141 (DTPGH), and 191 to 194 (NKVD) contribute to the GTP site.

It belongs to the TRAFAC class translation factor GTPase superfamily. Classic translation factor GTPase family. LepA subfamily.

The protein resides in the mitochondrion inner membrane. The enzyme catalyses GTP + H2O = GDP + phosphate + H(+). Functionally, promotes mitochondrial protein synthesis. May act as a fidelity factor of the translation reaction, by catalyzing a one-codon backward translocation of tRNAs on improperly translocated ribosomes. Binds to mitochondrial ribosomes in a GTP-dependent manner. This chain is Translation factor guf1, mitochondrial (guf1), found in Emericella nidulans (strain FGSC A4 / ATCC 38163 / CBS 112.46 / NRRL 194 / M139) (Aspergillus nidulans).